The primary structure comprises 155 residues: Protein-export protein SecB (155 aa).

It belongs to the SecB family. Homotetramer, a dimer of dimers. One homotetramer interacts with 1 SecA dimer.

It localises to the cytoplasm. Functionally, one of the proteins required for the normal export of preproteins out of the cell cytoplasm. It is a molecular chaperone that binds to a subset of precursor proteins, maintaining them in a translocation-competent state. It also specifically binds to its receptor SecA. The chain is Protein-export protein SecB from Citrobacter koseri (strain ATCC BAA-895 / CDC 4225-83 / SGSC4696).